Here is a 156-residue protein sequence, read N- to C-terminus: Small ribosomal subunit protein uS7 (156 aa).

Belongs to the universal ribosomal protein uS7 family. Part of the 30S ribosomal subunit. Contacts proteins S9 and S11.

Its function is as follows. One of the primary rRNA binding proteins, it binds directly to 16S rRNA where it nucleates assembly of the head domain of the 30S subunit. Is located at the subunit interface close to the decoding center, probably blocks exit of the E-site tRNA. The protein is Small ribosomal subunit protein uS7 of Syntrophotalea carbinolica (strain DSM 2380 / NBRC 103641 / GraBd1) (Pelobacter carbinolicus).